The chain runs to 1276 residues: Histone-lysine N-methyltransferase PRDM16 (1276 aa).

A compositionally biased stretch (basic residues) spans 1 to 10 (MRSKARARKL). The segment at 1-68 (MRSKARARKL…DFTPKEGSPY (68 aa)) is disordered. The SET domain occupies 82 to 211 (ADFELRESSI…PGEELLVHVK (130 aa)). A C2H2-type 1; atypical zinc finger spans residues 230-253 (FRCDECDELFQSKLDLRRHKKYTC). 5 C2H2-type zinc fingers span residues 281-303 (HECK…MVIH), 309-331 (YKCD…QMSH), 337-360 (FECE…RSQH), 366-388 (HACP…KHIH), and 394-416 (FICE…KRMH). The segment at 423–445 (IKCKDCGQMFSTTSSLNKHRRFC) adopts a C2H2-type 7; atypical zinc-finger fold. Disordered regions lie at residues 533–657 (SLLK…APPG) and 772–804 (PFDL…QPLD). Residues 561-570 (AVSNSSQGTT) are compositionally biased toward polar residues. Residues 575–597 (PEEKFESRLEDSCVEKLKTRSSD) are compositionally biased toward basic and acidic residues. Residues 609-624 (TTTGTDLDTTTGTGSD) show a composition bias toward low complexity. Over residues 632-642 (DPDKDKGKGKS) the composition is skewed to basic and acidic residues. The interval 679 to 1038 (DEQLLTATGA…KHEHENAPVS (360 aa)) is interaction with CTBP1, CTBP2 and ZNF516. Residues 739–1276 (PFTDRALAHN…SGAFHPINHL (538 aa)) are mediates interaction with SKI and regulation of TGF-beta signaling. 3 C2H2-type zinc fingers span residues 951–973 (YTCR…LRTH), 979–1002 (YRCK…RNIH), and 1008–1032 (FKCH…KHEH). Disordered regions lie at residues 1033–1065 (ENAP…HALL) and 1105–1163 (AQCP…EPAA). Positions 1047–1058 (HLGTSASSPTSE) are enriched in polar residues. A compositionally biased stretch (acidic residues) spans 1116–1133 (EDVEEEDDDDLEEDDEDS).

Belongs to the PRDM16 family. In terms of assembly, interacts with CEBPA, CEBPB and CEBPD; the interaction is direct. Interacts with PPARG and PPARA; controls brown adipocytes differentiation. Interacts with CTBP1 and CTBP2; represses the expression of WAT-specific genes. Interacts with PPARGC1A and PPARGC1B; interaction with PPARGC1A or PPARGC1B activates the transcription of BAT-specific gene. Interacts with HDAC1, SKI, SMAD2 and SMAD3; the interaction with SKI promotes the recruitment of SMAD3-HDAC1 complex on the promoter of TGF-beta target genes. Interacts with ZNF516; the interaction is direct and may play a role in the transcription of brown adipose tissue-specific gene. Expressed in uterus and kidney. Expressed in both cardiomyocytes and interstitial cells.

The protein localises to the nucleus. It localises to the cytoplasm. The enzyme catalyses L-lysyl(9)-[histone H3] + S-adenosyl-L-methionine = N(6)-methyl-L-lysyl(9)-[histone H3] + S-adenosyl-L-homocysteine + H(+). In terms of biological role, binds DNA and functions as a transcriptional regulator. Displays histone methyltransferase activity and monomethylates 'Lys-9' of histone H3 (H3K9me1) in vitro. Probably catalyzes the monomethylation of free histone H3 in the cytoplasm which is then transported to the nucleus and incorporated into nucleosomes where SUV39H methyltransferases use it as a substrate to catalyze histone H3 'Lys-9' trimethylation. Likely to be one of the primary histone methyltransferases along with MECOM/PRDM3 that direct cytoplasmic H3K9me1 methylation. Functions in the differentiation of brown adipose tissue (BAT) which is specialized in dissipating chemical energy in the form of heat in response to cold or excess feeding while white adipose tissue (WAT) is specialized in the storage of excess energy and the control of systemic metabolism. Together with CEBPB, regulates the differentiation of myoblastic precursors into brown adipose cells. Functions as a repressor of TGF-beta signaling. Its function is as follows. Binds DNA and functions as a transcriptional regulator. Functions as a repressor of TGF-beta signaling. May regulate granulocyte differentiation. The sequence is that of Histone-lysine N-methyltransferase PRDM16 from Homo sapiens (Human).